The chain runs to 225 residues: RNA-binding protein 24-A (225 aa).

Residues 11–88 (TKIFVGGLPY…RKANVNLAYL (78 aa)) form the RRM domain.

Its subcellular location is the nucleus. It is found in the cytoplasm. Multifunctional RNA-binding protein involved in the regulation of pre-mRNA splicing, mRNA stability and mRNA translation important for cell fate decision and differentiation. Plays a major role in pre-mRNA alternative splicing regulation. Mediates preferentially muscle-specific exon inclusion in numerous mRNAs important for striated cardiac and skeletal muscle cell differentiation. Binds to intronic splicing enhancer (ISE) composed of stretches of GU-rich motifs localized in flanking intron of exon that will be included by alternative splicing. Involved in embryonic stem cell (ESC) transition to cardiac cell differentiation by promoting pre-mRNA alternative splicing events of several pluripotency and/or differentiation genes. Plays a role in the regulation of mRNA stability and mRNA translation to which it is bound. Involved in myogenic differentiation by regulating myog levels. Binds to a huge amount of mRNAs. Required for embryonic heart development, sarcomer and M-band formation in striated muscles. The chain is RNA-binding protein 24-A (rbm24-a) from Xenopus laevis (African clawed frog).